The primary structure comprises 325 residues: UPF0285 protein MA_3856 (325 aa).

This sequence belongs to the UPF0285 family.

The chain is UPF0285 protein MA_3856 from Methanosarcina acetivorans (strain ATCC 35395 / DSM 2834 / JCM 12185 / C2A).